A 311-amino-acid polypeptide reads, in one-letter code: Ribosomal RNA small subunit methyltransferase H (311 aa).

S-adenosyl-L-methionine-binding positions include 32-34 (AGH), Asp-52, Phe-79, Asp-100, and Gln-107. Residues 289 to 298 (SKEELEENNR) are compositionally biased toward basic and acidic residues. Residues 289–311 (SKEELEENNRARSAKLRIAEKRK) form a disordered region. The segment covering 300 to 311 (RSAKLRIAEKRK) has biased composition (basic residues).

The protein belongs to the methyltransferase superfamily. RsmH family.

Its subcellular location is the cytoplasm. It catalyses the reaction cytidine(1402) in 16S rRNA + S-adenosyl-L-methionine = N(4)-methylcytidine(1402) in 16S rRNA + S-adenosyl-L-homocysteine + H(+). Its function is as follows. Specifically methylates the N4 position of cytidine in position 1402 (C1402) of 16S rRNA. The protein is Ribosomal RNA small subunit methyltransferase H of Bacillus velezensis (strain DSM 23117 / BGSC 10A6 / LMG 26770 / FZB42) (Bacillus amyloliquefaciens subsp. plantarum).